Here is a 415-residue protein sequence, read N- to C-terminus: Serine hydroxymethyltransferase (415 aa).

(6S)-5,6,7,8-tetrahydrofolate is bound by residues leucine 119 and 123-125; that span reads GHL. The residue at position 228 (lysine 228) is an N6-(pyridoxal phosphate)lysine. 353–355 lines the (6S)-5,6,7,8-tetrahydrofolate pocket; sequence SAF.

The protein belongs to the SHMT family. Homodimer. It depends on pyridoxal 5'-phosphate as a cofactor.

Its subcellular location is the cytoplasm. The catalysed reaction is (6R)-5,10-methylene-5,6,7,8-tetrahydrofolate + glycine + H2O = (6S)-5,6,7,8-tetrahydrofolate + L-serine. It participates in one-carbon metabolism; tetrahydrofolate interconversion. Its pathway is amino-acid biosynthesis; glycine biosynthesis; glycine from L-serine: step 1/1. Catalyzes the reversible interconversion of serine and glycine with tetrahydrofolate (THF) serving as the one-carbon carrier. Also exhibits THF-independent aldolase activity toward beta-hydroxyamino acids, producing glycine and aldehydes, via a retro-aldol mechanism. The sequence is that of Serine hydroxymethyltransferase from Haloarcula marismortui (strain ATCC 43049 / DSM 3752 / JCM 8966 / VKM B-1809) (Halobacterium marismortui).